The sequence spans 556 residues: Formate--tetrahydrofolate ligase 2 (556 aa).

T65–S72 is a binding site for ATP.

It belongs to the formate--tetrahydrofolate ligase family.

The enzyme catalyses (6S)-5,6,7,8-tetrahydrofolate + formate + ATP = (6R)-10-formyltetrahydrofolate + ADP + phosphate. It functions in the pathway one-carbon metabolism; tetrahydrofolate interconversion. This chain is Formate--tetrahydrofolate ligase 2, found in Streptococcus sanguinis (strain SK36).